A 271-amino-acid polypeptide reads, in one-letter code: Inactive phospholipid phosphatase 7 (271 aa).

The interval methionine 1–aspartate 69 is disordered. At methionine 1–methionine 112 the chain is on the cytoplasmic side. Polar residues predominate over residues serine 24 to arginine 36. Phosphoserine occurs at positions 43 and 62. The interval cysteine 70–cysteine 91 is interaction with MTOR. A helical membrane pass occupies residues valine 113–leucine 133. Over valine 134–glycine 141 the chain is Extracellular. A helical membrane pass occupies residues glutamine 142–valine 162. Residues glutamine 163–lysine 202 are Cytoplasmic-facing. Residues phenylalanine 203–phenylalanine 223 form a helical membrane-spanning segment. Topologically, residues cysteine 224 to aspartate 239 are extracellular. A helical transmembrane segment spans residues valine 240–serine 260. Residues serine 261–tryptophan 271 lie on the Cytoplasmic side of the membrane.

It belongs to the PA-phosphatase related phosphoesterase family. As to quaternary structure, homo- and heterooligomer. Interacts with MTOR; controls MTOR-dependent IGF2 expression during myoblast differentiation.

It is found in the nucleus envelope. Its subcellular location is the endoplasmic reticulum membrane. It localises to the membrane. Its function is as follows. Plays a role as negative regulator of myoblast differentiation, in part through effects on MTOR signaling. Has no detectable enzymatic activity. The polypeptide is Inactive phospholipid phosphatase 7 (Rattus norvegicus (Rat)).